Here is a 176-residue protein sequence, read N- to C-terminus: NAD(P)H-quinone oxidoreductase subunit 6, chloroplastic (176 aa).

A run of 5 helical transmembrane segments spans residues 10 to 30, 33 to 53, 61 to 81, 92 to 112, and 152 to 172; these read FLLV…VLLT, IYSA…HIPA, AQLL…VMFM, LWTV…VSLI, and FFLP…GAIA.

It belongs to the complex I subunit 6 family. As to quaternary structure, NDH is composed of at least 16 different subunits, 5 of which are encoded in the nucleus.

The protein localises to the plastid. Its subcellular location is the chloroplast thylakoid membrane. It catalyses the reaction a plastoquinone + NADH + (n+1) H(+)(in) = a plastoquinol + NAD(+) + n H(+)(out). The catalysed reaction is a plastoquinone + NADPH + (n+1) H(+)(in) = a plastoquinol + NADP(+) + n H(+)(out). In terms of biological role, NDH shuttles electrons from NAD(P)H:plastoquinone, via FMN and iron-sulfur (Fe-S) centers, to quinones in the photosynthetic chain and possibly in a chloroplast respiratory chain. The immediate electron acceptor for the enzyme in this species is believed to be plastoquinone. Couples the redox reaction to proton translocation, and thus conserves the redox energy in a proton gradient. The sequence is that of NAD(P)H-quinone oxidoreductase subunit 6, chloroplastic (ndhG) from Nandina domestica (Heavenly bamboo).